We begin with the raw amino-acid sequence, 1040 residues long: MQVLPPSSTGGPSRLFIMRPVATTLLMVAILLAGIIGYRALPVSALPEVDYPTIQVVTLYPGASPDVMTSAVTAPLERQFGQMSGLKQMSSQSSGGASVITLQFQLTLPLDVAEQEVQAAINAATNLLPSDLPNPPVYSKVNPADPPIMTLAVTSTAMPMTQVEDMVETRVAQKISQISGVGLVTLSGGQRPAVRVKLNAQAIAALGLTSETVRTAITGANVNSAKGSLDGPSRAVTLSANDQMQSAEEYRQLIIAYQNGAPIRLGDVATVEQGAENSWLGAWANKEQAIVMNVQRQPGANIISTADSIRQMLPQLTESLPKSVKVTVLSDRTTNIRASVNDTQFELMMAIALVVMIIYLFLRNIPATIIPGVAVPLSLIGTFAVMVFLDFSINNLTLMALTIATGFVVDDAIVVIENISRYIEKGEKPLAAALKGAGEIGFTIISLTFSLIAVLIPLLFMGDIVGRLFREFAITLAVAILISAVVSLTLTPMMCARMLSQESLRKQNRFSRASEKMFDRIIAAYGRGLAKVLNHPWLTLSVALSTLLLSVLLWVFIPKGFFPVQDNGIIQGTLQAPQSSSFANMAQRQRQVADVILQDPAVQSLTSFVGVDGTNPSLNSARLQINLKPLDERDDRVQKVIARLQTAVDKVPGVDLFLQPTQDLTIDTQVSRTQYQFTLQATSLDALSTWVPQLVEKLQQLPQLSDVSSDWQDQGLVAYVNVDRDSASRLGISMADVDNALYNAFGQRLISTIYTQANQYRVVLEHNTENTPGLAALDTIRLTSSDGGVVPLSSIAKIEQRFAPLSINHLDQFPVTTISFNMPDNYSLGDAVQAIMDTEKTLNLPVDITTQFQGSTLAFQSALGSTVWLIVAAVVAMYIVLGILYESFIHPITILSTLPTAGVGALLALLIAGSELDVIAIIGIILLIGIVKKNAIMMIDFALAAEREQGMSPRDAIYQACLLRFRPILMTTLAALLGALPLMLSTGVGAELRRPLGIGMVGGLVVSQVLTLFTTPVIYLLFDRLALWTKSRFARHEEEA.

The next 12 membrane-spanning stretches (helical) occupy residues 16 to 36 (FIMR…AGII), 347 to 367 (LMMA…NIPA), 369 to 389 (IIPG…MVFL), 396 to 416 (LTLM…IVVI), 440 to 460 (IGFT…PLLF), 472 to 492 (FAIT…TLTP), 537 to 557 (WLTL…WVFI), 863 to 883 (LGST…VLGI), 888 to 908 (FIHP…ALLA), 911 to 931 (IAGS…IGIV), 968 to 988 (ILMT…STGV), and 998 to 1018 (IGMV…TPVI).

Belongs to the resistance-nodulation-cell division (RND) (TC 2.A.6) family. MdtB subfamily. Part of a tripartite efflux system composed of MdtA, MdtB and MdtC. MdtB forms a heteromultimer with MdtC.

It localises to the cell inner membrane. The MdtABC tripartite complex confers resistance against novobiocin and deoxycholate. This Escherichia fergusonii (strain ATCC 35469 / DSM 13698 / CCUG 18766 / IAM 14443 / JCM 21226 / LMG 7866 / NBRC 102419 / NCTC 12128 / CDC 0568-73) protein is Multidrug resistance protein MdtB.